Here is a 292-residue protein sequence, read N- to C-terminus: Nanos homolog 1 (292 aa).

Disordered stretches follow at residues 1–41 (MEAF…QPFS) and 68–121 (GGNG…SRGR). An essential for its translational repressor activity region spans residues 40-56 (FSSWNDYLGLATLITKA). Positions 76-87 (PPSSSSSSCCSP) are enriched in low complexity. A compositionally biased stretch (acidic residues) spans 104–115 (DYDEDDDDDSDE). The Nanos-type zinc finger occupies 213-267 (VCVFCRNNKEAMALYTTHILKGPDGRVLCPVLRRYTCPLCGASGDNAHTIKYCPL). Residues Cys-214, Cys-217, His-230, Cys-241, Cys-249, Cys-252, His-260, and Cys-265 each coordinate Zn(2+). Short sequence motifs (C2HC) lie at residues 214–241 (CVFC…RVLC) and 249–265 (CPLC…IKYC). Positions 268–292 (SKVPPPPARPPPRSARDGPPGKKLR) are disordered. The span at 269–280 (KVPPPPARPPPR) shows a compositional bias: pro residues. Residues 281-292 (SARDGPPGKKLR) are compositionally biased toward basic and acidic residues.

It belongs to the nanos family. As to quaternary structure, interacts with PUM2, SNAPIN and CTNNB1. Interacts (via N-terminal region) with CTNND1. Interacts with DDX20 (via N-terminal region). As to expression, testis and ovary (at protein level). Predominantly expressed in testis. Specifically expressed during germline development. In adult tissues, it is mainly expressed in spermatogonia, the stem cells of the germline. Also expressed during meiosis in spermatocytes. Not present in late, post-meiotic stage germ cells. Expressed in fetal ovaries, while it is weakly or not expressed in mature postmeiotic oocytes, suggesting that it may be expressed in premeiotic female germ cells. Expressed at high levels only in the E-cadherin deficient cell lines. Highly expressed in lung carcinomas and mostly detected in invasive tumor cells and its expression correlates with tumor aggressiveness.

The protein resides in the cytoplasm. It localises to the perinuclear region. May act as a translational repressor which regulates translation of specific mRNAs by forming a complex with PUM2 that associates with the 3'-UTR of mRNA targets. Capable of interfering with the proadhesive and anti-invasive functions of E-cadherin. Up-regulates the production of MMP14 to promote tumor cell invasion. The sequence is that of Nanos homolog 1 (NANOS1) from Homo sapiens (Human).